The chain runs to 495 residues: Potassium voltage-gated channel subfamily A member 1 (495 aa).

A disordered region spans residues 1 to 30; sequence MTVMSGENADEASTAPGHPQDGSYPRQADH. The interval 1–128 is tetramerization domain; the sequence is MTVMSGENAD…FYELGEEAME (128 aa). At 1-164 the chain is on the cytoplasmic side; it reads MTVMSGENAD…LLFEYPESSG (164 aa). Serine 23 is modified (phosphoserine). A helical transmembrane segment spans residues 165–186; it reads PARVIAIVSVMVILISIVIFCL. Over 187-220 the chain is Extracellular; that stretch reads ETLPELKDDKDFTGTIHRIDNTTVIYTSNIFTDP. Asparagine 207 carries N-linked (GlcNAc...) asparagine glycosylation. The helical transmembrane segment at 221–242 threads the bilayer; that stretch reads FFIVETLCIIWFSFELVVRFFA. Cysteine 243 is lipidated: S-palmitoyl cysteine. Residues 243-253 are Cytoplasmic-facing; it reads CPSKTDFFKNI. Residues 254 to 274 form a helical membrane-spanning segment; sequence MNFIDIVAIIPYFITLGTEIA. The Extracellular segment spans residues 275–287; sequence EQEGNQKGEQATS. The helical; Voltage-sensor transmembrane segment at 288-308 threads the bilayer; the sequence is LAILRVIRLVRVFRIFKLSRH. Over 309-323 the chain is Cytoplasmic; sequence SKGLQILGQTLKASM. Residues 310–323 are S4-S5 linker; sequence KGLQILGQTLKASM. Position 322 is a phosphoserine; by PKA (serine 322). A helical membrane pass occupies residues 324–345; sequence RELGLLIFFLFIGVILFSSAVY. Residues 346–359 are Extracellular-facing; it reads FAEAEEAESHFSSI. Positions 360-371 form an intramembrane region, helical; sequence PDAFWWAVVSMT. A Selectivity filter motif is present at residues 372–377; it reads TVGYGD. An intramembrane segment occupies 372–379; it reads TVGYGDMY. The Extracellular segment spans residues 380–386; the sequence is PVTIGGK. Residues 387 to 415 form a helical membrane-spanning segment; it reads IVGSLCAIAGVLTIALPVPVIVSNFNYFY. The Cytoplasmic segment spans residues 416 to 495; the sequence is HRETEGEEQA…VNKSKLLTDV (80 aa). Phosphoserine occurs at positions 437 and 439. Residue serine 446 is modified to Phosphoserine; by PKA. The PDZ-binding signature appears at 493 to 495; sequence TDV.

The protein belongs to the potassium channel family. A (Shaker) (TC 1.A.1.2) subfamily. Kv1.1/KCNA1 sub-subfamily. Homotetramer and heterotetramer with other channel-forming alpha subunits, such as KCNA2, KCNA4, KCNA5, KCNA6 and KCNA7. Channel activity is regulated by interaction with the beta subunits KCNAB1 and KCNAB2. Identified in a complex with KCNA2 and KCNAB2. Interacts (via C-terminus) with the PDZ domains of DLG1, DLG2 and DLG4. Interacts with LGI1 within a complex containing LGI1, KCNA4 and KCNAB1. Interacts (via N-terminus) with STX1A; this promotes channel inactivation. Interacts (via N-terminus) with the heterodimer formed by GNB1 and GNG2; this promotes channel inactivation. Can interact simultaneously with STX1A and the heterodimer formed by GNB1 and GNG2. Interacts (via cytoplasmic N-terminal domain) with KCNRG; this inhibits channel activity. Interacts with ANK3; this inhibits channel activity. Interacts with ADAM11. Post-translationally, N-glycosylated. Palmitoylated on Cys-243; which may be required for membrane targeting. In terms of processing, phosphorylated on tyrosine residues. Phosphorylation increases in response to NRG1; this inhibits channel activity. Phosphorylation at Ser-446 regulates channel activity by down-regulating expression at the cell membrane. In terms of tissue distribution, detected in brain. Expressed in cerebellar cortex basket cell terminals, the area surround the Purkinje cell soma, and the pinceaux expansions encircling the axon initial segment (at protein level). Detected in the juxtaparanodal regions of the nodes of Ranvier in myelinated axons. Detected in the paranodal region in sciatic nerve. Detected on cell bodies in cerebellum, dorsal and ventral cochlear nucleus, pontine reticular nucleus, mesencephalic trigeminal nucleus, motor trigeminal nucleus and the pricipal sensory trigeminal nucleus. Detected in terminal fields of basket cells in the cerebellum corpus medullare. Detected in hippocampus CA3 pyramidal neurons and in the hilus and stratum moleculare of the dentate gyrus. Detected in the central nucleus and the external nucleus of the inferior colliculus. Detected in fiber tracts in the optic tract, external medullary lamina, stria terminalis, medulla, ventral pallidum and substantia nigra. Detected in neurons from dorsal root ganglion. Detected in neurons in the medial nucleus of the trapezoid body. Detected in midbrain dopamine neuron axon terminals. Detected in brain cortex. Detected in brainstem. Detected in juxtaparanodal regions of the nodes of Ranvier in the vagus nerve, but only at very low levels in the heart. Detected in the islet of Langerhans. Detected at the luminal membrane in distal convoluted tubules in the kidney (at protein level). Detected in hippocampus, thalamus, neocortex and ventral brain cortex, including the piriform and entorhinal cortex and the amygdala. Detected in midbrain dopamine neurons. Detected in heart atrium, ventricle, sinoatrial node and atrioventricular node.

It is found in the cell membrane. Its subcellular location is the cell projection. The protein resides in the axon. The protein localises to the membrane. It localises to the perikaryon. It is found in the dendrite. Its subcellular location is the cell junction. The protein resides in the synapse. The protein localises to the cytoplasmic vesicle. It localises to the endoplasmic reticulum. It is found in the presynaptic cell membrane. Its subcellular location is the presynapse. It catalyses the reaction K(+)(in) = K(+)(out). Its activity is regulated as follows. Inhibited by 4-aminopyridine (4-AP), tetraethylammonium (TEA) and dendrotoxin (DTX), but not by charybdotoxin (CTX). Its function is as follows. Voltage-gated potassium channel that mediates transmembrane potassium transport in excitable membranes, primarily in the brain and the central nervous system, but also in the kidney. Contributes to the regulation of the membrane potential and nerve signaling, and prevents neuronal hyperexcitability. Forms tetrameric potassium-selective channels through which potassium ions pass in accordance with their electrochemical gradient. The channel alternates between opened and closed conformations in response to the voltage difference across the membrane. Can form functional homotetrameric channels and heterotetrameric channels that contain variable proportions of KCNA1, KCNA2, KCNA4, KCNA5, KCNA6, KCNA7, and possibly other family members as well; channel properties depend on the type of alpha subunits that are part of the channel. Channel properties are modulated by cytoplasmic beta subunits that regulate the subcellular location of the alpha subunits and promote rapid inactivation of delayed rectifier potassium channels. In vivo, membranes probably contain a mixture of heteromeric potassium channel complexes, making it difficult to assign currents observed in intact tissues to any particular potassium channel family member. Homotetrameric KCNA1 forms a delayed-rectifier potassium channel that opens in response to membrane depolarization, followed by slow spontaneous channel closure. In contrast, a heterotetrameric channel formed by KCNA1 and KCNA4 shows rapid inactivation. Regulates neuronal excitability in hippocampus, especially in mossy fibers and medial perforant path axons, preventing neuronal hyperexcitability. May function as down-stream effector for G protein-coupled receptors and inhibit GABAergic inputs to basolateral amygdala neurons. May contribute to the regulation of neurotransmitter release, such as gamma-aminobutyric acid (GABA) release. Plays a role in regulating the generation of action potentials and preventing hyperexcitability in myelinated axons of the vagus nerve, and thereby contributes to the regulation of heart contraction. Required for normal neuromuscular responses. Regulates the frequency of neuronal action potential firing in response to mechanical stimuli, and plays a role in the perception of pain caused by mechanical stimuli, but does not play a role in the perception of pain due to heat stimuli. Required for normal responses to auditory stimuli and precise location of sound sources, but not for sound perception. The use of toxins that block specific channels suggest that it contributes to the regulation of the axonal release of the neurotransmitter dopamine. Required for normal postnatal brain development and normal proliferation of neuronal precursor cells in the brain. Plays a role in the reabsorption of Mg(2+) in the distal convoluted tubules in the kidney and in magnesium ion homeostasis, probably via its effect on the membrane potential. The chain is Potassium voltage-gated channel subfamily A member 1 from Mus musculus (Mouse).